A 174-amino-acid chain; its full sequence is MFLTVKLLLGQRCSLKVSGQESVATLKRLVSRRLKVPEEQQHLLFRGQLLEDDKHLSDYCIGPNASINVIMQPLEKMALKEAHQPQTQPLWHQLGLVLAKHFEPQDAKAVLQLLRQEHEERLQKISLEHLEQLAQYLLAEEPHVEPAGERELEAKARPQSSCDMEEKEEAAADQ.

Residues 1-76 (MFLTVKLLLG…INVIMQPLEK (76 aa)) enclose the Ubiquitin-like domain. Over residues 141 to 156 (EPHVEPAGERELEAKA) the composition is skewed to basic and acidic residues. Positions 141–174 (EPHVEPAGERELEAKARPQSSCDMEEKEEAAADQ) are disordered. The segment covering 163-174 (DMEEKEEAAADQ) has biased composition (acidic residues).

The protein localises to the cytoplasm. This chain is Ubiquitin-like protein 4B (UBL4B), found in Homo sapiens (Human).